The sequence spans 383 residues: Fructose-1,6-bisphosphate aldolase/phosphatase (383 aa).

Aspartate 11 (proton acceptor; for FBP phosphatase activity) is an active-site residue. Residues aspartate 11, histidine 18, aspartate 52, and aspartate 53 each coordinate Mg(2+). Histidine 18 provides a ligand contact to beta-D-fructose 1,6-bisphosphate. A dihydroxyacetone phosphate-binding site is contributed by histidine 18. Tyrosine 90 contributes to the beta-D-fructose 1,6-bisphosphate binding site. Glutamine 94 provides a ligand contact to Mg(2+). Residue glycine 103–asparagine 104 participates in beta-D-fructose 1,6-bisphosphate binding. Aspartate 131 is a Mg(2+) binding site. Residue lysine 132 participates in beta-D-fructose 1,6-bisphosphate binding. Lysine 132 is a dihydroxyacetone phosphate binding site. The active-site Proton donor/acceptor; for FBP aldolase activity is tyrosine 228. Lysine 231, aspartate 232, and aspartate 233 together coordinate Mg(2+). The active-site Schiff-base intermediate with DHAP; for FBP aldolase activity is the lysine 231. Beta-D-fructose 1,6-bisphosphate is bound by residues glutamine 241–histidine 242, arginine 265, aspartate 286, and tyrosine 347. The dihydroxyacetone phosphate site is built by arginine 265 and aspartate 286. The disordered stretch occupies residues phenylalanine 361 to aspartate 383. Over residues valine 374–aspartate 383 the composition is skewed to polar residues.

It belongs to the FBP aldolase/phosphatase family. As to quaternary structure, homooctamer; dimer of tetramers. It depends on Mg(2+) as a cofactor.

It carries out the reaction beta-D-fructose 1,6-bisphosphate + H2O = beta-D-fructose 6-phosphate + phosphate. The catalysed reaction is beta-D-fructose 1,6-bisphosphate = D-glyceraldehyde 3-phosphate + dihydroxyacetone phosphate. It functions in the pathway carbohydrate biosynthesis; gluconeogenesis. Functionally, catalyzes two subsequent steps in gluconeogenesis: the aldol condensation of dihydroxyacetone phosphate (DHAP) and glyceraldehyde-3-phosphate (GA3P) to fructose-1,6-bisphosphate (FBP), and the dephosphorylation of FBP to fructose-6-phosphate (F6P). In Metallosphaera sedula (strain ATCC 51363 / DSM 5348 / JCM 9185 / NBRC 15509 / TH2), this protein is Fructose-1,6-bisphosphate aldolase/phosphatase.